The sequence spans 380 residues: Cytochrome b (380 aa).

4 consecutive transmembrane segments (helical) span residues 34–54 (FGSL…LLAA), 78–99 (WLIR…YLHI), 114–134 (WNTG…GYVL), and 179–199 (FFTL…IHLT). Residues His84 and His98 each coordinate heme b. Heme b contacts are provided by His183 and His197. Position 202 (His202) interacts with a ubiquinone. The next 4 helical transmembrane spans lie at 227–247 (LKDT…ALFS), 289–309 (LGGV…PLLH), 321–341 (LFQL…WVGS), and 348–368 (FIII…ILFP).

Belongs to the cytochrome b family. The cytochrome bc1 complex contains 11 subunits: 3 respiratory subunits (MT-CYB, CYC1 and UQCRFS1), 2 core proteins (UQCRC1 and UQCRC2) and 6 low-molecular weight proteins (UQCRH/QCR6, UQCRB/QCR7, UQCRQ/QCR8, UQCR10/QCR9, UQCR11/QCR10 and a cleavage product of UQCRFS1). This cytochrome bc1 complex then forms a dimer. Heme b serves as cofactor.

It localises to the mitochondrion inner membrane. Component of the ubiquinol-cytochrome c reductase complex (complex III or cytochrome b-c1 complex) that is part of the mitochondrial respiratory chain. The b-c1 complex mediates electron transfer from ubiquinol to cytochrome c. Contributes to the generation of a proton gradient across the mitochondrial membrane that is then used for ATP synthesis. This Grus nigricollis (Black-necked crane) protein is Cytochrome b (MT-CYB).